A 474-amino-acid polypeptide reads, in one-letter code: Sestrin homolog (474 aa).

The protein belongs to the sestrin family.

It is found in the nucleus. The protein resides in the cytoplasm. Functionally, may function as a negative feedback regulator of TOR function. The protein is Sestrin homolog of Caenorhabditis elegans.